Consider the following 726-residue polypeptide: Transcription factor 12 (726 aa).

9 disordered regions span residues 27–75, 89–223, 243–267, 289–309, 345–367, 380–409, 501–532, 558–624, and 694–726; these read SPPV…SRGF, LVSH…TFFD, YGGM…HSHD, SSFH…HTPP, PDHT…SPLA, TASG…YENS, MGSV…SSEL, VENQ…ERRM, and EEEK…MGHL. The span at 29 to 47 shows a compositional bias: polar residues; that stretch reads PVNSGKNRPTTLGSSQFTA. Residues 55 to 74 show a composition bias toward low complexity; that stretch reads SQASWASGGQSSPSFESSRG. 3 stretches are compositionally biased toward polar residues: residues 145 to 157, 249 to 263, and 291 to 309; these read PGKS…SYTG, GSSS…YSNL, and FHRS…HTPP. Residues 348 to 359 show a composition bias toward low complexity; sequence TSSSFPSNPSTP. 2 stretches are compositionally biased toward polar residues: residues 389-409 and 510-532; these read GTTQ…YENS and GSLN…SSEL. Residues 559–575 are compositionally biased toward basic and acidic residues; that stretch reads ENQDKDDMHDSHASDDL. Residues 592-603 show a composition bias toward low complexity; it reads SSRPSCELSCSS. Basic and acidic residues predominate over residues 612–624; sequence PEQKAERERERRM. Residues 621-674 enclose the bHLH domain; that stretch reads ERRMANNARERLRVRDINEAFKELGRMCQLHLKSEKPQTKLLILHQAVAVILSL. The interval 676-699 is class A specific domain; it reads QQVRERNLNPKAACLKRREEEKVS. Residues 717–726 are compositionally biased toward polar residues; sequence TDTSNPMGHL.

As to quaternary structure, efficient DNA binding requires dimerization with another bHLH protein.

Its subcellular location is the nucleus. In terms of biological role, transcriptional regulator. Involved in the initiation of neuronal differentiation. Activates transcription by binding to the E box (5'-CANNTG-3'). May be involved in the functional network that regulates the development of the GnRH axis. In Danio rerio (Zebrafish), this protein is Transcription factor 12 (tcf12).